Here is a 253-residue protein sequence, read N- to C-terminus: 5-oxoprolinase subunit A (253 aa).

The protein belongs to the LamB/PxpA family. As to quaternary structure, forms a complex composed of PxpA, PxpB and PxpC.

It catalyses the reaction 5-oxo-L-proline + ATP + 2 H2O = L-glutamate + ADP + phosphate + H(+). Catalyzes the cleavage of 5-oxoproline to form L-glutamate coupled to the hydrolysis of ATP to ADP and inorganic phosphate. The polypeptide is 5-oxoprolinase subunit A (Azorhizobium caulinodans (strain ATCC 43989 / DSM 5975 / JCM 20966 / LMG 6465 / NBRC 14845 / NCIMB 13405 / ORS 571)).